Reading from the N-terminus, the 330-residue chain is Phosphate acyltransferase (330 aa).

It belongs to the PlsX family. As to quaternary structure, homodimer. Probably interacts with PlsY.

The protein resides in the cytoplasm. The catalysed reaction is a fatty acyl-[ACP] + phosphate = an acyl phosphate + holo-[ACP]. It functions in the pathway lipid metabolism; phospholipid metabolism. Functionally, catalyzes the reversible formation of acyl-phosphate (acyl-PO(4)) from acyl-[acyl-carrier-protein] (acyl-ACP). This enzyme utilizes acyl-ACP as fatty acyl donor, but not acyl-CoA. The protein is Phosphate acyltransferase of Bacillus cereus (strain B4264).